A 458-amino-acid chain; its full sequence is Phenylalanine-specific permease (458 aa).

Over 1–27 the chain is Cytoplasmic; it reads MKNASTVSEDTASNQEPTLHRGLHNRH. Residues 28–48 traverse the membrane as a helical segment; sequence IQLIALGGAIGTGLFLGIGPA. Over 49–50 the chain is Periplasmic; that stretch reads IQ. Residues 51–71 form a helical membrane-spanning segment; that stretch reads MAGPAVLLGYGVAGIIAFLIM. At 72–105 the chain is on the cytoplasmic side; it reads RQLGEMVVEEPVSGSFAHFAYKYWGPFAGFLSGW. A helical membrane pass occupies residues 106–126; sequence NYWVMFVLVGMAELTAAGIYM. At 127 to 132 the chain is on the periplasmic side; the sequence is QYWFPD. The helical transmembrane segment at 133-153 threads the bilayer; the sequence is VPTWIWAAAFFIIINAVNLVN. The Cytoplasmic segment spans residues 154–160; that stretch reads VRLYGET. The chain crosses the membrane as a helical span at residues 161-181; that stretch reads EFWFALIKVLAIIGMIGFGLW. Residues 182-196 lie on the Periplasmic side of the membrane; it reads LLFSGHGGEKASIDN. The chain crosses the membrane as a helical span at residues 197-217; sequence LWRYGGFFATGWNGLILSLAV. Residues 218-250 are Cytoplasmic-facing; the sequence is IMFSFGGLELIGITAAEARDPEKSIPKAVNQVV. Residues 251–271 form a helical membrane-spanning segment; sequence YRILLFYIGSLVVLLALYPWV. Residues 272–288 lie on the Periplasmic side of the membrane; it reads EVKSNSSPFVMIFHNLD. The chain crosses the membrane as a helical span at residues 289–309; the sequence is SNVVASALNFVILVASLSVYN. The Cytoplasmic portion of the chain corresponds to 310–341; sequence SGVYSNSRMLFGLSVQGNAPKFLTRVSRRGVP. Residues 342 to 362 traverse the membrane as a helical segment; sequence INSLMLSGAITSLVVLINYLL. The Periplasmic portion of the chain corresponds to 363–367; the sequence is PQKAF. A helical transmembrane segment spans residues 368–388; the sequence is GLLMALVVATLLLNWIMICLA. The Cytoplasmic segment spans residues 389-411; it reads HLRFRAAMRRQGRETQFKALLYP. A helical transmembrane segment spans residues 412 to 432; it reads FGNYLCIAFLGMILLLMCTMD. Residues 433–434 lie on the Periplasmic side of the membrane; it reads DM. Residues 435 to 455 form a helical membrane-spanning segment; that stretch reads RLSAILLPVWIVFLFMAFKTL. Residues 456–458 are Cytoplasmic-facing; sequence RRK.

This sequence belongs to the amino acid-polyamine-organocation (APC) superfamily. Amino acid transporter (AAT) (TC 2.A.3.1) family.

Its subcellular location is the cell inner membrane. It carries out the reaction L-phenylalanine(in) + H(+)(in) = L-phenylalanine(out) + H(+)(out). Permease that is involved in the active transport across the cytoplasmic membrane of phenylalanine. Can also transport tyrosine, but not tryptophan. The chain is Phenylalanine-specific permease from Escherichia coli (strain K12).